Consider the following 330-residue polypeptide: DNA-directed RNA polymerase subunit alpha (330 aa).

Positions Met-1–Arg-236 are alpha N-terminal domain (alpha-NTD). The segment at Phe-250–Asp-330 is alpha C-terminal domain (alpha-CTD).

Belongs to the RNA polymerase alpha chain family. Homodimer. The RNAP catalytic core consists of 2 alpha, 1 beta, 1 beta' and 1 omega subunit. When a sigma factor is associated with the core the holoenzyme is formed, which can initiate transcription.

It carries out the reaction RNA(n) + a ribonucleoside 5'-triphosphate = RNA(n+1) + diphosphate. In terms of biological role, DNA-dependent RNA polymerase catalyzes the transcription of DNA into RNA using the four ribonucleoside triphosphates as substrates. The sequence is that of DNA-directed RNA polymerase subunit alpha from Vibrio parahaemolyticus serotype O3:K6 (strain RIMD 2210633).